The primary structure comprises 261 residues: Indole-3-glycerol phosphate synthase (261 aa).

It belongs to the TrpC family.

The enzyme catalyses 1-(2-carboxyphenylamino)-1-deoxy-D-ribulose 5-phosphate + H(+) = (1S,2R)-1-C-(indol-3-yl)glycerol 3-phosphate + CO2 + H2O. It functions in the pathway amino-acid biosynthesis; L-tryptophan biosynthesis; L-tryptophan from chorismate: step 4/5. In Burkholderia ambifaria (strain ATCC BAA-244 / DSM 16087 / CCUG 44356 / LMG 19182 / AMMD) (Burkholderia cepacia (strain AMMD)), this protein is Indole-3-glycerol phosphate synthase.